Reading from the N-terminus, the 295-residue chain is Nucleotide-binding protein LSL_1171 (295 aa).

13–20 (GMSGAGKT) provides a ligand contact to ATP. GTP is bound at residue 63–66 (DLRS).

It belongs to the RapZ-like family.

In terms of biological role, displays ATPase and GTPase activities. The sequence is that of Nucleotide-binding protein LSL_1171 from Ligilactobacillus salivarius (strain UCC118) (Lactobacillus salivarius).